A 342-amino-acid chain; its full sequence is RNA 3'-terminal phosphate cyclase (342 aa).

This sequence belongs to the RNA 3'-terminal cyclase family. Type 1 subfamily.

The protein localises to the cytoplasm. It carries out the reaction a 3'-end 3'-phospho-ribonucleotide-RNA + GTP = a 3'-end 2',3'-cyclophospho-ribonucleotide-RNA + GMP + diphosphate. Inhibited by GMP. Its function is as follows. Catalyzes the GTP-dependent conversion of 3'-phosphate to a 2',3'-cyclic phosphodiester at the end of RNA. The biological role of this enzyme is unknown but it is likely to function in some aspects of cellular RNA processing. In Pyrococcus furiosus (strain ATCC 43587 / DSM 3638 / JCM 8422 / Vc1), this protein is RNA 3'-terminal phosphate cyclase.